A 364-amino-acid chain; its full sequence is Long-wave-sensitive opsin 1 (364 aa).

Topologically, residues 1–52 (MAHTWGPQRLAGGQPQANFEESTQGSIFTYTNSNSTRDPFEGPNYHIAPRWV) are extracellular. Residue Ser-22 is glycosylated (O-linked (GlcNAc) serine). The N-linked (GlcNAc...) asparagine glycan is linked to Asn-34. Residues 53-77 (YHLTSAWMVFVVIASVFTNGLVLAA) traverse the membrane as a helical segment. Residues 78 to 89 (TMRFKKLRHPLN) lie on the Cytoplasmic side of the membrane. A helical transmembrane segment spans residues 90–115 (WILVNLAIADLAETIIASTISVVNQM). Topologically, residues 116-129 (YGYFVLGHPLCVVE) are extracellular. Cys-126 and Cys-203 are oxidised to a cystine. The chain crosses the membrane as a helical span at residues 130 to 149 (GYTVSLCGITGLWSLAIISW). The Cytoplasmic portion of the chain corresponds to 150 to 168 (ERWMVVCKPFGNVRFDAKL). The helical transmembrane segment at 169-192 (ATAGIAFSWIWAAVWTAPPIFGWS) threads the bilayer. Residues 193–218 (RYWPHGLKTSCGPDVFSGSSYPGVQS) are Extracellular-facing. The chain crosses the membrane as a helical span at residues 219-246 (YMIVLMITCCFIPLSVIILCYLQVWLAI). The Cytoplasmic portion of the chain corresponds to 247-268 (RAVAKQQKESESTQKAEKEVTR). Residues 269–292 (MVMVMIFAYCLCWGPYTFFACFAA) traverse the membrane as a helical segment. The Extracellular segment spans residues 293–300 (AHPGYAFH). A helical transmembrane segment spans residues 301-325 (PLVAALPAYFAKSATIYNPIIYVFM). Lys-312 carries the post-translational modification N6-(retinylidene)lysine. Residues 326–364 (NRQFRNCILQLFGKKVDDSSELSSVSKTEASSVSSVSPA) lie on the Cytoplasmic side of the membrane.

It belongs to the G-protein coupled receptor 1 family. Opsin subfamily. In terms of processing, phosphorylated on some or all of the serine and threonine residues present in the C-terminal region. As to expression, the three color pigments are found in the cone photoreceptor cells.

The protein resides in the membrane. Visual pigments are the light-absorbing molecules that mediate vision. They consist of an apoprotein, opsin, covalently linked to cis-retinal. This chain is Long-wave-sensitive opsin 1 (OPN1LW), found in Capra hircus (Goat).